A 144-amino-acid chain; its full sequence is uncharacterized protein (144 aa).

Residues I2–L144 enclose the N-acetyltransferase domain.

This sequence belongs to the acetyltransferase family.

Its subcellular location is the cytoplasm. The protein localises to the nucleus. This is an uncharacterized protein from Schizosaccharomyces pombe (strain 972 / ATCC 24843) (Fission yeast).